The sequence spans 389 residues: Anhydro-N-acetylmuramic acid kinase (389 aa).

11–18 (GTSLDGVD) is a binding site for ATP.

This sequence belongs to the anhydro-N-acetylmuramic acid kinase family.

It carries out the reaction 1,6-anhydro-N-acetyl-beta-muramate + ATP + H2O = N-acetyl-D-muramate 6-phosphate + ADP + H(+). It participates in amino-sugar metabolism; 1,6-anhydro-N-acetylmuramate degradation. Its pathway is cell wall biogenesis; peptidoglycan recycling. Catalyzes the specific phosphorylation of 1,6-anhydro-N-acetylmuramic acid (anhMurNAc) with the simultaneous cleavage of the 1,6-anhydro ring, generating MurNAc-6-P. Is required for the utilization of anhMurNAc either imported from the medium or derived from its own cell wall murein, and thus plays a role in cell wall recycling. This chain is Anhydro-N-acetylmuramic acid kinase, found in Albidiferax ferrireducens (strain ATCC BAA-621 / DSM 15236 / T118) (Rhodoferax ferrireducens).